The chain runs to 227 residues: N-acetyltransferase 8 (227 aa).

Over 1 to 42 the chain is Cytoplasmic; that stretch reads MAPCHIRKYQESDRQWVVGLLSRGMAEHAPATFRQLLKLPRT. Residues 43–63 form a helical; Signal-anchor for type II membrane protein membrane-spanning segment; it reads LILLLGGPLALLLVSGSWLLA. The N-acetyltransferase domain occupies 61-220; the sequence is LLALVFSISL…HTVHFIYHLP (160 aa). The Lumenal portion of the chain corresponds to 64-227; the sequence is LVFSISLFPA…HLPSSKVGSL (164 aa).

Belongs to the NAT8 family. Preferentially expressed in liver and kidney. Also detected in brain (at protein level).

It is found in the endoplasmic reticulum-Golgi intermediate compartment membrane. The protein localises to the endoplasmic reticulum membrane. The catalysed reaction is L-lysyl-[protein] + acetyl-CoA = N(6)-acetyl-L-lysyl-[protein] + CoA + H(+). It catalyses the reaction an S-substituted L-cysteine + acetyl-CoA = an N-acetyl-L-cysteine-S-conjugate + CoA + H(+). The protein operates within sulfur metabolism; glutathione metabolism. Functionally, endoplasmic reticulum (ER)-membrane-bound lysine N-acetyltransferase catalyzing the N6-acetylation of lysine residues in the lumen of the ER in various proteins, including PROM1 and BACE1, using acetyl-CoA as acetyl donor. Thereby, may regulate apoptosis through the acetylation and the regulation of the expression of PROM1. May also regulate amyloid beta-peptide secretion through acetylation of BACE1 and the regulation of its expression in neurons. N(6)-lysine acetylation in the ER maintains protein homeostasis and regulates reticulophagy. Alternatively, acetylates the free alpha-amino group of cysteine S-conjugates to form mercapturic acids. This is the final step in a major route for detoxification of a wide variety of reactive electrophiles which starts with their incorporation into glutathione S-conjugates. The glutathione S-conjugates are then further processed into cysteine S-conjugates and finally mercapturic acids which are water soluble and can be readily excreted in urine or bile. The chain is N-acetyltransferase 8 from Homo sapiens (Human).